The chain runs to 1384 residues: Hepatocyte growth factor receptor (1384 aa).

Positions 1 to 24 (MKAPAVLAPGILVLLFTFVQKSNG) are cleaved as a signal peptide. Over 25-933 (ECKEALVKSR…VIVQPDQNFT (909 aa)) the chain is Extracellular. The Sema domain occupies 27-516 (KEALVKSRMN…TGKKITKIPL (490 aa)). N45 is a glycosylation site (N-linked (GlcNAc...) asparagine). Cystine bridges form between C95–C101, C98–C160, C133–C141, and C173–C176. N-linked (GlcNAc...) asparagine glycosylation is present at N106. N149 carries N-linked (GlcNAc...) asparagine glycosylation. N-linked (GlcNAc...) asparagine glycans are attached at residues N203 and N359. Cystine bridges form between C299/C364 and C386/C398. Residues N400 and N406 are each glycosylated (N-linked (GlcNAc...) asparagine). 4 disulfide bridges follow: C521/C539, C527/C562, C530/C546, and C542/C552. 3 consecutive IPT/TIG domains span residues 564-656 (PTIY…FSYV), 658-740 (PIIT…FIYR), and 743-837 (PIVY…LIYV). O-linked (Man) threonine glycosylation is present at T583. N608 and N636 each carry an N-linked (GlcNAc...) asparagine glycan. T677 and T762 each carry an O-linked (Man) threonine glycan. Residues N786, N880, and N931 are each glycosylated (N-linked (GlcNAc...) asparagine). The helical transmembrane segment at 934–956 (GLIVGVVSVSIILLLLLGLFLWL) threads the bilayer. Over 957–1384 (KKRKQIKDLG…NVSGEDDDDT (428 aa)) the chain is Cytoplasmic. Position 967 is a phosphoserine (S967). T978 is subject to Phosphothreonine. Phosphoserine occurs at positions 991, 998, and 1001. Position 1004 is a phosphotyrosine (Y1004). The region spanning 1079 to 1346 (VHFNEVIGRG…RIAAIFSAFI (268 aa)) is the Protein kinase domain. Residues 1085–1093 (IGRGHFGCV) and K1111 each bind ATP. D1205 (proton acceptor) is an active-site residue. Residues 1213-1382 (LDEKFTVKVA…QENVSGEDDD (170 aa)) are interaction with RANBP9. Position 1231 is a phosphotyrosine (Y1231). 2 positions are modified to phosphotyrosine; by autocatalysis: Y1235 and Y1236. T1290 is modified (phosphothreonine). Residues 1321–1360 (WHPKAELRPSFSELVSRIAAIFSAFIGEHYVHVNATYVNV) are interaction with MUC20. Residues Y1350 and Y1357 each carry the phosphotyrosine; by autocatalysis modification. Y1366 carries the post-translational modification Phosphotyrosine.

It belongs to the protein kinase superfamily. Tyr protein kinase family. As to quaternary structure, heterodimer made of an alpha chain (50 kDa) and a beta chain (145 kDa) which are disulfide linked. Binds PLXNB1. Interacts when phosphorylated with downstream effectors including STAT3, PIK3R1, SRC, PCLG1, GRB2 and GAB1. Interacts with SPSB1, SPSB2 and SPSB4. Interacts with INPP5D/SHIP1. When phosphorylated at Tyr-1357, interacts with INPPL1/SHIP2. Interacts with RANBP9 and RANBP10, as well as SPSB1, SPSB2, SPSB3 and SPSB4. SPSB1 binding occurs in the presence and in the absence of HGF, however HGF treatment has a positive effect on this interaction. Interacts with MUC20; prevents interaction with GRB2 and suppresses hepatocyte growth factor-induced cell proliferation. Interacts with GRB10. Interacts with PTPN1 and PTPN2. Interacts with HSP90AA1 and HSP90AB1; the interaction suppresses MET kinase activity. Interacts with tensin TNS3. Interacts (when phosphorylated) with tensin TNS4 (via SH2 domain); the interaction increases MET protein stability by inhibiting MET endocytosis and subsequent lysosomal degradation. Post-translationally, autophosphorylated in response to ligand binding on Tyr-1235 and Tyr-1236 in the kinase domain leading to further phosphorylation of Tyr-1350 and Tyr-1357 in the C-terminal multifunctional docking site. Dephosphorylated by PTPRJ at Tyr-1350 and Tyr-1366. Dephosphorylated by PTPN1 and PTPN2. Ubiquitinated. Ubiquitination by CBL regulates the receptor stability and activity through proteasomal degradation. In terms of processing, O-mannosylation of IPT/TIG domains by TMEM260 is required for protein maturation. O-mannosylated residues are composed of single mannose glycans that are not elongated or modified.

It localises to the membrane. The enzyme catalyses L-tyrosyl-[protein] + ATP = O-phospho-L-tyrosyl-[protein] + ADP + H(+). In its inactive state, the C-terminal tail interacts with the catalytic domain and inhibits the kinase activity. Upon ligand binding, the C-terminal tail is displaced and becomes phosphorylated, thus increasing the kinase activity. Functionally, receptor tyrosine kinase that transduces signals from the extracellular matrix into the cytoplasm by binding to hepatocyte growth factor/HGF ligand. Regulates many physiological processes including proliferation, scattering, morphogenesis and survival. Ligand binding at the cell surface induces autophosphorylation of MET on its intracellular domain that provides docking sites for downstream signaling molecules. Following activation by ligand, interacts with the PI3-kinase subunit PIK3R1, PLCG1, SRC, GRB2, STAT3 or the adapter GAB1. Recruitment of these downstream effectors by MET leads to the activation of several signaling cascades including the RAS-ERK, PI3 kinase-AKT, or PLCgamma-PKC. The RAS-ERK activation is associated with the morphogenetic effects while PI3K/AKT coordinates prosurvival effects. During embryonic development, MET signaling plays a role in gastrulation, development and migration of muscles and neuronal precursors, angiogenesis and kidney formation. In adults, participates in wound healing as well as organ regeneration and tissue remodeling. Also promotes differentiation and proliferation of hematopoietic cells. The protein is Hepatocyte growth factor receptor (MET) of Ovis aries (Sheep).